The following is a 133-amino-acid chain: Ribosome-binding factor A (133 aa).

The protein belongs to the RbfA family. Monomer. Binds 30S ribosomal subunits, but not 50S ribosomal subunits or 70S ribosomes.

Its subcellular location is the cytoplasm. Its function is as follows. One of several proteins that assist in the late maturation steps of the functional core of the 30S ribosomal subunit. Associates with free 30S ribosomal subunits (but not with 30S subunits that are part of 70S ribosomes or polysomes). Required for efficient processing of 16S rRNA. May interact with the 5'-terminal helix region of 16S rRNA. This chain is Ribosome-binding factor A, found in Salmonella schwarzengrund (strain CVM19633).